Reading from the N-terminus, the 214-residue chain is Large ribosomal subunit protein uL3 (214 aa).

N5-methylglutamine is present on Gln-151.

Belongs to the universal ribosomal protein uL3 family. In terms of assembly, part of the 50S ribosomal subunit. Forms a cluster with proteins L14 and L19. Post-translationally, methylated by PrmB.

Its function is as follows. One of the primary rRNA binding proteins, it binds directly near the 3'-end of the 23S rRNA, where it nucleates assembly of the 50S subunit. This Saccharophagus degradans (strain 2-40 / ATCC 43961 / DSM 17024) protein is Large ribosomal subunit protein uL3.